A 110-amino-acid chain; its full sequence is Nucleoid-associated protein Mkms_4993 (110 aa).

Belongs to the YbaB/EbfC family. As to quaternary structure, homodimer.

The protein resides in the cytoplasm. It is found in the nucleoid. Its function is as follows. Binds to DNA and alters its conformation. May be involved in regulation of gene expression, nucleoid organization and DNA protection. The protein is Nucleoid-associated protein Mkms_4993 of Mycobacterium sp. (strain KMS).